The following is a 64-amino-acid chain: Large ribosomal subunit protein bL35 (64 aa).

The interval 1-31 (MPKMKTHSGAKKRFKLTGTGKLKRQQANRRH) is disordered.

This sequence belongs to the bacterial ribosomal protein bL35 family.

This is Large ribosomal subunit protein bL35 from Paenarthrobacter aurescens (strain TC1).